The following is an 868-amino-acid chain: B-cell receptor CD22 (868 aa).

Positions 1–21 (MRVHYLWLLLILGHVASARYS) are cleaved as a signal peptide. An Ig-like V-type domain is found at 22–148 (SANDWTVDHP…MEPIHLNVSE (127 aa)). At 22-708 (SANDWTVDHP…YYSPETIGKR (687 aa)) the chain is on the extracellular side. Disulfide bonds link C41/C177, C46/C112, and C171/C235. 2 N-linked (GlcNAc...) asparagine glycosylation sites follow: N111 and N122. Residue R130 participates in N-acetylneuraminate binding. N-linked (GlcNAc...) asparagine glycosylation is found at N145, N174, N271, N281, N384, N414, N466, N567, and N595. Ig-like C2-type domains are found at residues 153-250 (PYIQ…RTVR), 257-347 (PKLE…VELT), 352-435 (PEPS…AKLD), 440-521 (PKAV…VILN), 526-603 (PRDV…ETLS), and 614-697 (PRRL…STLT). 4 disulfides stabilise this stretch: C278-C330, C374-C417, C463-C505, and C550-C592. A disulfide bridge connects residues C637 and C680. The helical transmembrane segment at 709–727 (VALGLGFCLTICILAIWGM) threads the bilayer. The Cytoplasmic segment spans residues 728–868 (KIQKKWKQNR…EDVDYVTLKH (141 aa)). Residues 738–752 (SQQGLQENSSGQSFF) show a composition bias toward polar residues. The disordered stretch occupies residues 738 to 772 (SQQGLQENSSGQSFFVRNKKARRTPLSEGPQSQGC). Phosphoserine is present on residues S746, S747, and S750. The ITIM motif 1 motif lies at 781–786 (VSYAIL). Position 783 is a phosphotyrosine (Y783). The disordered stretch occupies residues 790–812 (ESDTHNTGDAGTPATQAPPPNNS). Residues Y828, Y843, and Y863 each carry the phosphotyrosine modification. 2 short sequence motifs (ITIM motif) span residues 841–846 (IHYSEL) and 861–866 (VDYVTL).

Belongs to the immunoglobulin superfamily. SIGLEC (sialic acid binding Ig-like lectin) family. In terms of assembly, predominantly monomer of isoform CD22-beta. Also found as heterodimer of isoform CD22-beta and a shorter isoform. Interacts with PTPN6/SHP-1, LYN, SYK, PIK3R1/PIK3R2 and PLCG1 upon phosphorylation. Interacts with GRB2, INPP5D and SHC1 upon phosphorylation. May form a complex with INPP5D/SHIP, GRB2 and SHC1. Phosphorylated on tyrosine residues by LYN. Post-translationally, phosphorylation of Tyr-783 and Tyr-843 are involved in binding to SYK. Phosphorylation of Tyr-828 is involved in binding to GRB2. Phosphorylation of Tyr-863 is involved in binding to SYK, PLCG2 and PIK3R1/PIK3R2. In terms of tissue distribution, B-lymphocytes.

It localises to the cell membrane. Functionally, most highly expressed siglec (sialic acid-binding immunoglobulin-like lectin) on B-cells that plays a role in various aspects of B-cell biology including differentiation, antigen presentation, and trafficking to bone marrow. Binds to alpha 2,6-linked sialic acid residues of surface molecules such as CD22 itself, CD45 and IgM in a cis configuration. Can also bind to ligands on other cells as an adhesion molecule in a trans configuration. Acts as an inhibitory coreceptor on the surface of B-cells and inhibits B-cell receptor induced signaling, characterized by inhibition of the calcium mobilization and cellular activation. Mechanistically, the immunoreceptor tyrosine-based inhibitory motif domain is phosphorylated by the Src kinase LYN, which in turn leads to the recruitment of the protein tyrosine phosphatase 1/PTPN6, leading to the negative regulation of BCR signaling. If this negative signaling from is of sufficient strength, apoptosis of the B-cell can be induced. In Mus musculus (Mouse), this protein is B-cell receptor CD22.